The chain runs to 223 residues: MHRINALKHLALLGALKKPVKISSSEFTRYTSTGSKTAARILKQLEEEGSIDRLIIPEGQMISITEKGHKWLESEFSDYKHIFCGDEDKVELYGNVITGLGEGQYYIAQDGYGSQFEEKLGFKPYPGTLNVRLTSHSADILKRKSQKNIIPISGFTDGQRTFGGCNCYFVEVEGVRGAVVTPERSHYPHDLLEIISPVHLRKTLELNDGDEVKIMIEDRSACE.

Residues 1-89 are unknown; sequence MHRINALKHL…KHIFCGDEDK (89 aa). The riboflavin kinase stretch occupies residues 90–223; the sequence is VELYGNVITG…IMIEDRSACE (134 aa). 99–104 contributes to the CDP binding site; it reads GLGEGQ. Residues threonine 128 and asparagine 130 each contribute to the Mg(2+) site. 2 residues coordinate FMN: serine 185 and glutamate 193. 198–201 contributes to the CDP binding site; sequence VHLR.

It belongs to the archaeal riboflavin kinase family. The cofactor is Mg(2+).

It carries out the reaction riboflavin + CTP = CDP + FMN + H(+). The protein operates within cofactor biosynthesis; FMN biosynthesis; FMN from riboflavin (CTP route): step 1/1. Its function is as follows. Catalyzes the CTP-dependent phosphorylation of riboflavin (vitamin B2) to form flavin mononucleotide (FMN). In Methanococcoides burtonii (strain DSM 6242 / NBRC 107633 / OCM 468 / ACE-M), this protein is Riboflavin kinase (ribK).